We begin with the raw amino-acid sequence, 359 residues long: AA9 family lytic polysaccharide monooxygenase B (359 aa).

The first 18 residues, M1–A18, serve as a signal peptide directing secretion. Cu(2+) is bound by residues H19 and H102. 2 cysteine pairs are disulfide-bonded: C72–C190 and C113–C117. N150 carries N-linked (GlcNAc...) asparagine glycosylation. O2 contacts are provided by H176 and Q185. Y187 is a binding site for Cu(2+). Positions G241–K310 are disordered. The span at G245–H254 shows a compositional bias: polar residues. A compositionally biased stretch (low complexity) spans T255–I304. N-linked (GlcNAc...) asparagine glycosylation occurs at N345.

The protein belongs to the polysaccharide monooxygenase AA9 family. Cu(2+) is required as a cofactor.

It is found in the secreted. The catalysed reaction is [(1-&gt;4)-beta-D-glucosyl]n+m + reduced acceptor + O2 = 4-dehydro-beta-D-glucosyl-[(1-&gt;4)-beta-D-glucosyl]n-1 + [(1-&gt;4)-beta-D-glucosyl]m + acceptor + H2O.. Its function is as follows. Lytic polysaccharide monooxygenase (LPMO) that depolymerizes crystalline and amorphous polysaccharides via the oxidation of scissile alpha- or beta-(1-4)-glycosidic bonds, yielding C1 and C4 oxidation products. Catalysis by LPMOs requires the reduction of the active-site copper from Cu(II) to Cu(I) by a reducing agent and H(2)O(2) or O(2) as a cosubstrate. Active on cellulose and on xyloglucan for deconstruction of plant biomass. The chain is AA9 family lytic polysaccharide monooxygenase B from Geotrichum candidum (Oospora lactis).